The chain runs to 254 residues: Phosphoribosylaminoimidazole-succinocarboxamide synthase (254 aa).

It belongs to the SAICAR synthetase family.

The enzyme catalyses 5-amino-1-(5-phospho-D-ribosyl)imidazole-4-carboxylate + L-aspartate + ATP = (2S)-2-[5-amino-1-(5-phospho-beta-D-ribosyl)imidazole-4-carboxamido]succinate + ADP + phosphate + 2 H(+). The protein operates within purine metabolism; IMP biosynthesis via de novo pathway; 5-amino-1-(5-phospho-D-ribosyl)imidazole-4-carboxamide from 5-amino-1-(5-phospho-D-ribosyl)imidazole-4-carboxylate: step 1/2. The polypeptide is Phosphoribosylaminoimidazole-succinocarboxamide synthase (Sinorhizobium medicae (strain WSM419) (Ensifer medicae)).